Here is a 420-residue protein sequence, read N- to C-terminus: Dual-specificity RNA methyltransferase RlmN (420 aa).

Glu115 (proton acceptor) is an active-site residue. Residues 121–388 enclose the Radical SAM core domain; sequence DADRGTLCVS…APIRTPRGRD (268 aa). A disulfide bond links Cys128 and Cys393. The [4Fe-4S] cluster site is built by Cys135, Cys139, and Cys142. S-adenosyl-L-methionine is bound by residues 217 to 218, Ser249, 271 to 273, and Asn350; these read GE and SLH. Cys393 serves as the catalytic S-methylcysteine intermediate.

Belongs to the radical SAM superfamily. RlmN family. The cofactor is [4Fe-4S] cluster.

It localises to the cytoplasm. The enzyme catalyses adenosine(2503) in 23S rRNA + 2 reduced [2Fe-2S]-[ferredoxin] + 2 S-adenosyl-L-methionine = 2-methyladenosine(2503) in 23S rRNA + 5'-deoxyadenosine + L-methionine + 2 oxidized [2Fe-2S]-[ferredoxin] + S-adenosyl-L-homocysteine. It carries out the reaction adenosine(37) in tRNA + 2 reduced [2Fe-2S]-[ferredoxin] + 2 S-adenosyl-L-methionine = 2-methyladenosine(37) in tRNA + 5'-deoxyadenosine + L-methionine + 2 oxidized [2Fe-2S]-[ferredoxin] + S-adenosyl-L-homocysteine. In terms of biological role, specifically methylates position 2 of adenine 2503 in 23S rRNA and position 2 of adenine 37 in tRNAs. m2A2503 modification seems to play a crucial role in the proofreading step occurring at the peptidyl transferase center and thus would serve to optimize ribosomal fidelity. The sequence is that of Dual-specificity RNA methyltransferase RlmN from Sphingopyxis alaskensis (strain DSM 13593 / LMG 18877 / RB2256) (Sphingomonas alaskensis).